We begin with the raw amino-acid sequence, 660 residues long: DNA mismatch repair protein MutL (660 aa).

The segment at 408–436 (DQTSASASVKHASRSQDENQLSEHPNLDF) is disordered. A compositionally biased stretch (polar residues) spans 425–436 (ENQLSEHPNLDF).

Belongs to the DNA mismatch repair MutL/HexB family.

Functionally, this protein is involved in the repair of mismatches in DNA. It is required for dam-dependent methyl-directed DNA mismatch repair. May act as a 'molecular matchmaker', a protein that promotes the formation of a stable complex between two or more DNA-binding proteins in an ATP-dependent manner without itself being part of a final effector complex. This Streptococcus uberis (strain ATCC BAA-854 / 0140J) protein is DNA mismatch repair protein MutL.